The following is a 610-amino-acid chain: UvrABC system protein C (610 aa).

Residues 16-94 (SQPGVYRMYD…IKLYQPRYNV (79 aa)) enclose the GIY-YIG domain. One can recognise a UVR domain in the interval 204-239 (DQVINQLVSRMEQASQNLAFEEAARLRDQIQAVRRV).

The protein belongs to the UvrC family. Interacts with UvrB in an incision complex.

It localises to the cytoplasm. Its function is as follows. The UvrABC repair system catalyzes the recognition and processing of DNA lesions. UvrC both incises the 5' and 3' sides of the lesion. The N-terminal half is responsible for the 3' incision and the C-terminal half is responsible for the 5' incision. The protein is UvrABC system protein C of Cronobacter sakazakii (strain ATCC BAA-894) (Enterobacter sakazakii).